The primary structure comprises 204 residues: Glycerol-3-phosphate acyltransferase (204 aa).

The next 5 helical transmembrane spans lie at 8–28 (ILIF…CYIF), 53–73 (VPAA…VVIA), 81–101 (FITA…IFFG), 116–136 (FGFS…VAII), and 155–175 (VIFT…IIIL).

Belongs to the PlsY family. As to quaternary structure, probably interacts with PlsX.

It localises to the cell inner membrane. The catalysed reaction is an acyl phosphate + sn-glycerol 3-phosphate = a 1-acyl-sn-glycero-3-phosphate + phosphate. Its pathway is lipid metabolism; phospholipid metabolism. Its function is as follows. Catalyzes the transfer of an acyl group from acyl-phosphate (acyl-PO(4)) to glycerol-3-phosphate (G3P) to form lysophosphatidic acid (LPA). This enzyme utilizes acyl-phosphate as fatty acyl donor, but not acyl-CoA or acyl-ACP. The polypeptide is Glycerol-3-phosphate acyltransferase (Francisella tularensis subsp. mediasiatica (strain FSC147)).